Here is a 182-residue protein sequence, read N- to C-terminus: Protein Syd (182 aa).

Belongs to the Syd family.

Its subcellular location is the cell inner membrane. Its function is as follows. Interacts with the SecY protein in vivo. May bind preferentially to an uncomplexed state of SecY, thus functioning either as a chelating agent for excess SecY in the cell or as a regulatory factor that negatively controls the translocase function. This chain is Protein Syd, found in Aliivibrio salmonicida (strain LFI1238) (Vibrio salmonicida (strain LFI1238)).